A 340-amino-acid chain; its full sequence is Pre-rRNA-processing protein esf-2 (340 aa).

Composition is skewed to basic and acidic residues over residues 1 to 12 (MPEDDVRNKFLD) and 19 to 32 (DAGHGSDSEDDFQK). The disordered stretch occupies residues 1-103 (MPEDDVRNKF…KSVLASDLPG (103 aa)). Residues 44 to 64 (DDEDSEADDFTDAEEEHDQDD) are compositionally biased toward acidic residues. Basic and acidic residues predominate over residues 65–95 (AESKDAPAKDGQETTDGKEKKDGKKEKEKKS). One can recognise an RRM domain in the interval 124 to 214 (GVVYISRVPP…KKGSYYRDDI (91 aa)). Residues 272 to 329 (AKKASKGSKAGGEGAAQVTESTIPSAAATTTTTTNDDKRRTFKQIPLAKKRKLDETQP) form a disordered region.

This sequence belongs to the ESF2/ABP1 family.

The protein resides in the nucleus. Its subcellular location is the nucleolus. Involved in the small subunit (SSU) processome assembly and function, and in the 18S rRNA synthesis. Required for the early cleavages at sites A0, A1 and A2. In Neurospora crassa (strain ATCC 24698 / 74-OR23-1A / CBS 708.71 / DSM 1257 / FGSC 987), this protein is Pre-rRNA-processing protein esf-2 (esf-2).